The primary structure comprises 463 residues: Elongation factor 1-alpha (463 aa).

The tr-type G domain maps to Lys-5–Thr-242. Residues Gly-14–Ser-21 are G1. GTP is bound at residue Gly-14 to Ser-21. The segment at Gly-70–Asp-74 is G2. The tract at residues Asp-91 to Gly-94 is G3. GTP contacts are provided by residues Asp-91–His-95 and Asn-153–Asp-156. A G4 region spans residues Asn-153–Asp-156. Positions Ser-194–Trp-196 are G5. A 5-glutamyl glycerylphosphorylethanolamine mark is found at Glu-301 and Glu-374.

It belongs to the TRAFAC class translation factor GTPase superfamily. Classic translation factor GTPase family. EF-Tu/EF-1A subfamily.

The protein localises to the cytoplasm. In terms of biological role, this protein promotes the GTP-dependent binding of aminoacyl-tRNA to the A-site of ribosomes during protein biosynthesis. In Bombyx mori (Silk moth), this protein is Elongation factor 1-alpha.